Here is a 256-residue protein sequence, read N- to C-terminus: MVKSHIGSWILVLFVAMWSDVGLCKKRPKPGGGWNTGGSRYPGQGSPGGNRYPPQGGGGWGQPHGGGWGQPHGGGWGQPHGGGWGQPHGGGGWGQGGSHSQWNKPSKPKTNMKHVAGAAAAGAVVGGLGGYMLGSAMSRPLIHFGNDYEDRYYRENMYRYPNQVYYRPVDQYSNQNNFVHDCVNITVKQHTVTTTTKGENFTETDIKIMERVVEQMCITQYQRESQAYYQRGASVILFSSPPVILLISFLIFLIVG.

The signal sequence occupies residues 1–24; the sequence is MVKSHIGSWILVLFVAMWSDVGLC. Residues 25-233 are interaction with GRB2, ERI3 and SYN1; that stretch reads KKRPKPGGGW…ESQAYYQRGA (209 aa). The interval 28–110 is disordered; it reads PKPGGGWNTG…QWNKPSKPKT (83 aa). 5 tandem repeats follow at residues 54-62, 63-70, 71-78, 79-86, and 87-95. The interval 54–95 is 5 X 8 AA tandem repeats of P-H-G-G-G-W-G-Q; the sequence is PQGGGGWGQPHGGGWGQPHGGGWGQPHGGGWGQPHGGGGWGQ. Residues 55-97 show a composition bias toward gly residues; that stretch reads QGGGGWGQPHGGGWGQPHGGGWGQPHGGGWGQPHGGGGWGQGG. 12 residues coordinate Cu(2+): H64, G65, G66, H72, G73, G74, H80, G81, G82, H88, G90, and G91. Cysteines 182 and 217 form a disulfide. N-linked (GlcNAc...) asparagine glycans are attached at residues N184 and N200. Residue A233 is the site of GPI-anchor amidated alanine attachment. Positions 234 to 256 are cleaved as a propeptide — removed in mature form; that stretch reads SVILFSSPPVILLISFLIFLIVG.

Belongs to the prion family. As to quaternary structure, monomer and homodimer. Has a tendency to aggregate into amyloid fibrils containing a cross-beta spine, formed by a steric zipper of superposed beta-strands. Soluble oligomers may represent an intermediate stage on the path to fibril formation. Copper binding may promote oligomerization. Interacts with GRB2, APP, ERI3/PRNPIP and SYN1. Mislocalized cytosolically exposed PrP interacts with MGRN1; this interaction alters MGRN1 subcellular location and causes lysosomal enlargement. Interacts with KIAA1191.

It is found in the cell membrane. The protein localises to the golgi apparatus. Its primary physiological function is unclear. Has cytoprotective activity against internal or environmental stresses. May play a role in neuronal development and synaptic plasticity. May be required for neuronal myelin sheath maintenance. May play a role in iron uptake and iron homeostasis. Soluble oligomers are toxic to cultured neuroblastoma cells and induce apoptosis (in vitro). Association with GPC1 (via its heparan sulfate chains) targets PRNP to lipid rafts. Also provides Cu(2+) or Zn(2+) for the ascorbate-mediated GPC1 deaminase degradation of its heparan sulfate side chains. This is Major prion protein (PRNP) from Ovis canadensis (Bighorn sheep).